The chain runs to 717 residues: Translation initiation factor eIF2B subunit epsilon (717 aa).

Residues 1–14 show a composition bias toward low complexity; it reads MAATAAVPGAAAGR. The segment at 1–37 is disordered; it reads MAATAAVPGAAAGRASKRGGGGSGGGGTQGAEEEPPP. Arginine 18 is modified (omega-N-methylarginine). Over residues 18 to 29 the composition is skewed to gly residues; the sequence is RGGGGSGGGGTQ. Phosphoserine is present on serine 23. Residues lysine 57 and lysine 99 each participate in a glycyl lysine isopeptide (Lys-Gly) (interchain with G-Cter in ubiquitin) cross-link. Position 126 is a phosphoserine (serine 126). Residues lysine 137 and lysine 213 each participate in a glycyl lysine isopeptide (Lys-Gly) (interchain with G-Cter in ubiquitin) cross-link. Position 318 is a phosphothreonine (threonine 318). Positions 442-479 are disordered; it reads GSVISLHPPDAEEDEDDGQFSDDSGADQEKEKVKLKGY. 3 positions are modified to phosphoserine: serine 446, serine 462, and serine 465. The span at 452-467 shows a compositional bias: acidic residues; it reads AEEDEDDGQFSDDSGA. A Glycyl lysine isopeptide (Lys-Gly) (interchain with G-Cter in ubiquitin) cross-link involves residue lysine 501. A disordered region spans residues 517 to 538; that stretch reads TEEESETESEGSVDPEELDSRA. Positions 519-533 are enriched in acidic residues; that stretch reads EESETESEGSVDPEE. Phosphoserine is present on residues serine 528 and serine 536. A W2 domain is found at 539 to 716; the sequence is GSPQLDDIRV…REAEEESSED (178 aa). The residue at position 540 (serine 540) is a Phosphoserine; by DYRK2. Serine 713 is modified (phosphoserine).

It belongs to the eIF-2B gamma/epsilon subunits family. As to quaternary structure, component of the translation initiation factor 2B (eIF2B) complex which is a heterodecamer of two sets of five different subunits: alpha, beta, gamma, delta and epsilon. Subunits alpha, beta and delta comprise a regulatory subcomplex and subunits epsilon and gamma comprise a catalytic subcomplex. Within the complex, the hexameric regulatory complex resides at the center, with the two heterodimeric catalytic subcomplexes bound on opposite sides. Post-translationally, phosphorylated at Ser-540 by DYRK2; this is required for subsequent phosphorylation by GSK3B. Phosphorylated on serine and threonine residues by GSK3B; phosphorylation inhibits its function. In terms of processing, polyubiquitinated, probably by NEDD4.

The protein localises to the cytoplasm. It localises to the cytosol. Activated by the chemical integrated stress response (ISR) inhibitor ISRIB which stimulates guanine nucleotide exchange factor activity for both phosphorylated and unphosphorylated eIF2. In terms of biological role, acts as a component of the translation initiation factor 2B (eIF2B) complex, which catalyzes the exchange of GDP for GTP on eukaryotic initiation factor 2 (eIF2) gamma subunit. Its guanine nucleotide exchange factor activity is repressed when bound to eIF2 complex phosphorylated on the alpha subunit, thereby limiting the amount of methionyl-initiator methionine tRNA available to the ribosome and consequently global translation is repressed. In Mus musculus (Mouse), this protein is Translation initiation factor eIF2B subunit epsilon (Eif2b5).